The following is a 120-amino-acid chain: Large ribosomal subunit protein bL12 (120 aa).

It belongs to the bacterial ribosomal protein bL12 family. As to quaternary structure, homodimer. Part of the ribosomal stalk of the 50S ribosomal subunit. Forms a multimeric L10(L12)X complex, where L10 forms an elongated spine to which 2 to 4 L12 dimers bind in a sequential fashion. Binds GTP-bound translation factors.

Functionally, forms part of the ribosomal stalk which helps the ribosome interact with GTP-bound translation factors. Is thus essential for accurate translation. This is Large ribosomal subunit protein bL12 from Listeria monocytogenes serovar 1/2a (strain ATCC BAA-679 / EGD-e).